Reading from the N-terminus, the 414-residue chain is Translation initiation factor 2 subunit gamma (414 aa).

One can recognise a tr-type G domain in the interval 8–206; that stretch reads QPEVNIGVVG…AIEKFIPTPP (199 aa). Residues 17–24 are G1; it reads GHVDHGKT. The Mg(2+) site is built by Asp-20, Thr-24, Gly-45, and Thr-47. Residue 20 to 25 participates in GTP binding; the sequence is DHGKTT. Residues 45–49 are G2; that stretch reads GMTIK. Residues Cys-60, Cys-63, Cys-75, and Cys-77 each coordinate Zn(2+). The segment at 93 to 96 is G3; sequence DAPG. Residues 149 to 152 and 184 to 186 contribute to the GTP site; these read NKVD and SAL. Residues 149–152 are G4; it reads NKVD. The G5 stretch occupies residues 184–186; sequence SAL.

Belongs to the TRAFAC class translation factor GTPase superfamily. Classic translation factor GTPase family. EIF2G subfamily. As to quaternary structure, heterotrimer composed of an alpha, a beta and a gamma chain. It depends on Mg(2+) as a cofactor.

It catalyses the reaction GTP + H2O = GDP + phosphate + H(+). Its function is as follows. eIF-2 functions in the early steps of protein synthesis by forming a ternary complex with GTP and initiator tRNA. The chain is Translation initiation factor 2 subunit gamma from Aeropyrum pernix (strain ATCC 700893 / DSM 11879 / JCM 9820 / NBRC 100138 / K1).